Consider the following 267-residue polypeptide: Probable 6-oxopurine nucleoside phosphorylase (267 aa).

Phosphate is bound by residues serine 10, 50-51, and 83-84; these read RH and SA. Residue methionine 188 coordinates substrate. Threonine 189 provides a ligand contact to phosphate. 212–214 lines the substrate pocket; that stretch reads NYA.

Belongs to the PNP/MTAP phosphorylase family. MTAP subfamily. In terms of assembly, homohexamer. Dimer of a homotrimer.

It carries out the reaction a purine D-ribonucleoside + phosphate = a purine nucleobase + alpha-D-ribose 1-phosphate. The catalysed reaction is guanosine + phosphate = alpha-D-ribose 1-phosphate + guanine. It catalyses the reaction inosine + phosphate = alpha-D-ribose 1-phosphate + hypoxanthine. The protein operates within purine metabolism; purine nucleoside salvage. In terms of biological role, purine nucleoside phosphorylase which is highly specific for 6-oxopurine nucleosides. Cleaves guanosine or inosine to respective bases and sugar-1-phosphate molecules. Involved in purine salvage. This Thermococcus kodakarensis (strain ATCC BAA-918 / JCM 12380 / KOD1) (Pyrococcus kodakaraensis (strain KOD1)) protein is Probable 6-oxopurine nucleoside phosphorylase.